The following is a 341-amino-acid chain: MLKEIYLSLSLVLVFACGLLYQLTMRSQCFFACLPPFSFPQGLDGLLRSGRSIMFIETSERVEPPPMVSCAVESAAKIYPEQPIIFFMKGLRDSVQLTSNTSYPAFSLLSAINNVFFVPLDMERLFKDTPLFSWYTKVNSSTEKHWLHVSSDAARLAIIWKYGGIYMDTDVISLQPIPEENFLAAQGSRHSSNGVFGFLPHHPFLWACMENFVEHYDSTIWGNQGPQLMTRMLRVWCRLKDFHGLGDLKCLNISFLHPQRFYPIPYPQWKRYYQVWDKEPSFNESYALHLWNYMNKEGKTVVRGSKTLVENLYQKHCPKTYRVLIQGAEGTVSKKPGTGSR.

Topologically, residues 1–4 are cytoplasmic; it reads MLKE. A helical; Signal-anchor for type II membrane protein membrane pass occupies residues 5-25; it reads IYLSLSLVLVFACGLLYQLTM. Topologically, residues 26–341 are lumenal; that stretch reads RSQCFFACLP…VSKKPGTGSR (316 aa). Asn100 carries N-linked (GlcNAc...) asparagine glycosylation. Residues 168 to 170 carry the DXD motif motif; sequence DTD.

Belongs to the glycosyltransferase 32 family.

It is found in the golgi apparatus membrane. Its pathway is protein modification; protein glycosylation. Catalyzes the transfer of N-acetylglucosamine (GlcNAc) to core 2 branched O-glycans. Necessary for the synthesis of type III mucin which is specifically produced in the stomach, duodenum, and pancreatic duct. May protect against inflammation-associated gastric adenocarcinoma. The protein is Alpha-1,4-N-acetylglucosaminyltransferase of Mus musculus (Mouse).